The primary structure comprises 294 residues: Elongation factor Ts (294 aa).

Positions 80–83 (TDFV) are involved in Mg(2+) ion dislocation from EF-Tu.

It belongs to the EF-Ts family.

Its subcellular location is the cytoplasm. Its function is as follows. Associates with the EF-Tu.GDP complex and induces the exchange of GDP to GTP. It remains bound to the aminoacyl-tRNA.EF-Tu.GTP complex up to the GTP hydrolysis stage on the ribosome. This chain is Elongation factor Ts, found in Listeria innocua serovar 6a (strain ATCC BAA-680 / CLIP 11262).